The primary structure comprises 353 residues: Mitochondrial distribution and morphology protein 12 (353 aa).

Positions 1–330 constitute an SMP-LTD domain; that stretch reads MSFDIKWENL…WPSWICLDMN (330 aa). Acidic residues-rich tracts occupy residues 64 to 75, 84 to 103, and 330 to 342; these read DEFYEDTTDSPE, TGDDDDDDDDDEDDESDDDG, and NDDDEEEEEEENP. Disordered regions lie at residues 64-140 and 330-353; these read DEFY…NRSR and NDDDEEEEEEENPSESSSTTHVGS.

The protein belongs to the MDM12 family. As to quaternary structure, component of the ER-mitochondria encounter structure (ERMES) or MDM complex, composed of MMM1, MDM10, MDM12 and MDM34. An MMM1 homodimer associates with one molecule of MDM12 on each side in a pairwise head-to-tail manner, and the SMP-LTD domains of MMM1 and MDM12 generate a continuous hydrophobic tunnel for phospholipid trafficking.

It is found in the mitochondrion outer membrane. It localises to the endoplasmic reticulum membrane. Functionally, component of the ERMES/MDM complex, which serves as a molecular tether to connect the endoplasmic reticulum (ER) and mitochondria. Components of this complex are involved in the control of mitochondrial shape and protein biogenesis, and function in nonvesicular lipid trafficking between the ER and mitochondria. MDM12 is required for the interaction of the ER-resident membrane protein MMM1 and the outer mitochondrial membrane-resident beta-barrel protein MDM10. The MDM12-MMM1 subcomplex functions in the major beta-barrel assembly pathway that is responsible for biogenesis of all mitochondrial outer membrane beta-barrel proteins, and acts in a late step after the SAM complex. The MDM10-MDM12-MMM1 subcomplex further acts in the TOM40-specific pathway after the action of the MDM12-MMM1 complex. Essential for establishing and maintaining the structure of mitochondria and maintenance of mtDNA nucleoids. This is Mitochondrial distribution and morphology protein 12 from Candida tropicalis (strain ATCC MYA-3404 / T1) (Yeast).